Reading from the N-terminus, the 381-residue chain is MDTEMSVNMSDFLHDQATRAPESLQQSYILMEDLYERKLWKQLTDALIVFFDTPETVPLRLPLYTNFVNSFRPNINQLKAVYMGLKAFESCSNDEALRNLNQIVNELDEEKYKDAYVYSIVAIARIKLISGKLDEARELLVKASKIIDHIDYVESLIHSSYYSVSADYYKAKADYAQYYRHCLLYLSCIDLDKCSHTELVERAVDLSVAAILGDIYNFGELLLHPVFELLVGTQHEWLHDLVIAMNVGDLPLFERLMGQINKMPLLQSSVALLGQKIRLMALIELVFQLPPNQRTLTFDTIARATRIPSNEVELLIMRALSVGLITGVIDEVTQIVTISSVQSRILNHSQIASMESRLREWNQNIKNLSNVVEISGKGVFV.

The PCI domain occupies 177-343; sequence QYYRHCLLYL…QIVTISSVQS (167 aa).

This sequence belongs to the proteasome subunit S11 family.

Its function is as follows. Acts as a regulatory subunit of the 26S proteasome which is involved in the ATP-dependent degradation of ubiquitinated proteins. This is Probable 26S proteasome regulatory subunit rpn9 (rpn9) from Schizosaccharomyces pombe (strain 972 / ATCC 24843) (Fission yeast).